Here is a 182-residue protein sequence, read N- to C-terminus: Adenylate kinase (182 aa).

G12–T17 contacts ATP. The tract at residues S32–V61 is NMP. AMP contacts are provided by residues T33, R38, E59–V61, G85–R88, and Q92. An LID region spans residues E126 to D132. R127 is a binding site for ATP. The AMP site is built by R129 and R140. A168 is an ATP binding site.

It belongs to the adenylate kinase family. In terms of assembly, monomer.

It is found in the cytoplasm. It catalyses the reaction AMP + ATP = 2 ADP. Its pathway is purine metabolism; AMP biosynthesis via salvage pathway; AMP from ADP: step 1/1. Catalyzes the reversible transfer of the terminal phosphate group between ATP and AMP. Plays an important role in cellular energy homeostasis and in adenine nucleotide metabolism. This Prochlorococcus marinus (strain NATL2A) protein is Adenylate kinase.